A 316-amino-acid chain; its full sequence is tRNA dimethylallyltransferase (316 aa).

23 to 30 (GPTASGKS) is an ATP binding site. 25–30 (TASGKS) is a substrate binding site. Residues 48–51 (DSMQ) form an interaction with substrate tRNA region.

The protein belongs to the IPP transferase family. Monomer. The cofactor is Mg(2+).

It catalyses the reaction adenosine(37) in tRNA + dimethylallyl diphosphate = N(6)-dimethylallyladenosine(37) in tRNA + diphosphate. Catalyzes the transfer of a dimethylallyl group onto the adenine at position 37 in tRNAs that read codons beginning with uridine, leading to the formation of N6-(dimethylallyl)adenosine (i(6)A). This Rhodopseudomonas palustris (strain BisB18) protein is tRNA dimethylallyltransferase.